The chain runs to 311 residues: tRNA-cytidine(32) 2-sulfurtransferase (311 aa).

The short motif at 47 to 52 (SGGKDS) is the PP-loop motif element. C122, C125, and C213 together coordinate [4Fe-4S] cluster.

It belongs to the TtcA family. Homodimer. The cofactor is Mg(2+). Requires [4Fe-4S] cluster as cofactor.

It localises to the cytoplasm. It catalyses the reaction cytidine(32) in tRNA + S-sulfanyl-L-cysteinyl-[cysteine desulfurase] + AH2 + ATP = 2-thiocytidine(32) in tRNA + L-cysteinyl-[cysteine desulfurase] + A + AMP + diphosphate + H(+). Its pathway is tRNA modification. Catalyzes the ATP-dependent 2-thiolation of cytidine in position 32 of tRNA, to form 2-thiocytidine (s(2)C32). The sulfur atoms are provided by the cysteine/cysteine desulfurase (IscS) system. This Escherichia fergusonii (strain ATCC 35469 / DSM 13698 / CCUG 18766 / IAM 14443 / JCM 21226 / LMG 7866 / NBRC 102419 / NCTC 12128 / CDC 0568-73) protein is tRNA-cytidine(32) 2-sulfurtransferase.